We begin with the raw amino-acid sequence, 113 residues long: Hydrogenase maturation factor HybF (113 aa).

Ni(2+) contacts are provided by histidine 2 and glutamate 3. Residues cysteine 73, cysteine 76, cysteine 89, and cysteine 92 each contribute to the Zn(2+) site.

The protein belongs to the HypA/HybF family. HybF subfamily.

Functionally, involved in the maturation of [NiFe] hydrogenases. Required for nickel insertion into the metal center of the hydrogenase. The chain is Hydrogenase maturation factor HybF from Escherichia coli O6:H1 (strain CFT073 / ATCC 700928 / UPEC).